A 2053-amino-acid polypeptide reads, in one-letter code: Integrator complex subunit 1 (2053 aa).

Disordered stretches follow at residues 36–58 and 249–285; these read KILPIKGMSSSDRKREASTALAS and SLPSGQAHRDSMTVDDDSGDNSTQSLDASPLNTESEP. A compositionally biased stretch (polar residues) spans 268–283; sequence DNSTQSLDASPLNTES. A helical membrane pass occupies residues 708–728; sequence LAIIAFYWKAWLILLMISAHN.

Belongs to the Integrator subunit 1 family. Belongs to the multiprotein complex Integrator, at least composed of IntS1, IntS2, IntS3, IntS4, omd/IntS5, IntS6, defl/IntS7, IntS8, IntS9, IntS10, IntS11, IntS12, asun/IntS13, IntS14 and IntS15. The core complex associates with protein phosphatase 2A subunits mts/PP2A and Pp2A-29B, to form the Integrator-PP2A (INTAC) complex. Within the complex, interacts with IntS12 and IntS9. Interaction with IntS12 is likely to be important for promoting 3'-end processing of snRNAs. Interacts with Mediator complex members Cdk8 and CycC.

It localises to the nucleus membrane. Its subcellular location is the nucleus. Component of the integrator complex, a multiprotein complex that terminates RNA polymerase II (Pol II) transcription in the promoter-proximal region of genes. The integrator complex provides a quality checkpoint during transcription elongation by driving premature transcription termination of transcripts that are unfavorably configured for transcriptional elongation: the complex terminates transcription by (1) catalyzing dephosphorylation of the C-terminal domain (CTD) of Pol II subunit Polr2A/Rbp1 and Spt5, and (2) degrading the exiting nascent RNA transcript via endonuclease activity. The integrator complex is also involved in the 3'-end processing of the U7 snRNA, and also the spliceosomal snRNAs U1, U2, U4 and U5. Required for the normal expression of the Integrator complex component IntS12. This is Integrator complex subunit 1 from Drosophila melanogaster (Fruit fly).